Consider the following 309-residue polypeptide: Ornithine carbamoyltransferase (309 aa).

Carbamoyl phosphate contacts are provided by residues 52–55 (STRT), Gln79, Arg103, and 130–133 (HPCQ). L-ornithine-binding positions include Asn161, Asp221, and 225-226 (SM). Carbamoyl phosphate is bound by residues 261–262 (CL) and Arg289.

Belongs to the aspartate/ornithine carbamoyltransferase superfamily. OTCase family.

It is found in the cytoplasm. It carries out the reaction carbamoyl phosphate + L-ornithine = L-citrulline + phosphate + H(+). The protein operates within amino-acid biosynthesis; L-arginine biosynthesis; L-arginine from L-ornithine and carbamoyl phosphate: step 1/3. Reversibly catalyzes the transfer of the carbamoyl group from carbamoyl phosphate (CP) to the N(epsilon) atom of ornithine (ORN) to produce L-citrulline. The polypeptide is Ornithine carbamoyltransferase (Methanoculleus marisnigri (strain ATCC 35101 / DSM 1498 / JR1)).